Consider the following 279-residue polypeptide: Movement protein (279 aa).

It belongs to the cucumovirus movement protein family.

The protein resides in the host cell junction. Its subcellular location is the host plasmodesma. Its function is as follows. Transports viral genome to neighboring plant cells directly through plasmosdesmata, without any budding. The movement protein allows efficient cell to cell propagation, by bypassing the host cell wall barrier. Acts by forming a tubular structure at the host plasmodesmata, enlarging it enough to allow free passage of virion capsids. The protein is Movement protein of Cucumber mosaic virus (strain C7-2) (CMV).